A 236-amino-acid polypeptide reads, in one-letter code: 5'-methylthioadenosine/S-adenosylhomocysteine nucleosidase (236 aa).

The active-site Proton acceptor is the E12. Substrate-binding positions include G78, I153, and 174 to 175; that span reads ME. D198 functions as the Proton donor in the catalytic mechanism.

This sequence belongs to the PNP/UDP phosphorylase family. MtnN subfamily.

It carries out the reaction S-adenosyl-L-homocysteine + H2O = S-(5-deoxy-D-ribos-5-yl)-L-homocysteine + adenine. The enzyme catalyses S-methyl-5'-thioadenosine + H2O = 5-(methylsulfanyl)-D-ribose + adenine. The catalysed reaction is 5'-deoxyadenosine + H2O = 5-deoxy-D-ribose + adenine. The protein operates within amino-acid biosynthesis; L-methionine biosynthesis via salvage pathway; S-methyl-5-thio-alpha-D-ribose 1-phosphate from S-methyl-5'-thioadenosine (hydrolase route): step 1/2. Functionally, catalyzes the irreversible cleavage of the glycosidic bond in both 5'-methylthioadenosine (MTA) and S-adenosylhomocysteine (SAH/AdoHcy) to adenine and the corresponding thioribose, 5'-methylthioribose and S-ribosylhomocysteine, respectively. Also cleaves 5'-deoxyadenosine, a toxic by-product of radical S-adenosylmethionine (SAM) enzymes, into 5-deoxyribose and adenine. This chain is 5'-methylthioadenosine/S-adenosylhomocysteine nucleosidase, found in Shewanella baltica (strain OS223).